Reading from the N-terminus, the 227-residue chain is MAHPAQLGLQDATSPVMEELITFHDHALMAMSLISLLVLYALFSTLTTKMTNTNITDAQEMETIWTILPAIILVLIAFPSLRILYMTDEVNNPSFTIKSIGHQWYWTYEYTDYGGLIFNSYMLPPLFLNPGDLRLLEVDNRVVLPIEAPVRMMITSQDVLHSWTIPTLGLKTDAVPGRLNQTVFTATRPGVYYGQCSEICGANHSFMPIVAELIPLKIFEMGPVFTL.

The Mitochondrial intermembrane segment spans residues 1–14 (MAHPAQLGLQDATS). The helical transmembrane segment at 15-45 (PVMEELITFHDHALMAMSLISLLVLYALFST) threads the bilayer. Over 46–59 (LTTKMTNTNITDAQ) the chain is Mitochondrial matrix. Residues 60–87 (EMETIWTILPAIILVLIAFPSLRILYMT) traverse the membrane as a helical segment. Residues 88-227 (DEVNNPSFTI…IFEMGPVFTL (140 aa)) are Mitochondrial intermembrane-facing. Residues H161, C196, E198, C200, H204, and M207 each contribute to the Cu cation site. Residue E198 participates in Mg(2+) binding.

It belongs to the cytochrome c oxidase subunit 2 family. Component of the cytochrome c oxidase (complex IV, CIV), a multisubunit enzyme composed of 14 subunits. The complex is composed of a catalytic core of 3 subunits MT-CO1, MT-CO2 and MT-CO3, encoded in the mitochondrial DNA, and 11 supernumerary subunits COX4I, COX5A, COX5B, COX6A, COX6B, COX6C, COX7A, COX7B, COX7C, COX8 and NDUFA4, which are encoded in the nuclear genome. The complex exists as a monomer or a dimer and forms supercomplexes (SCs) in the inner mitochondrial membrane with NADH-ubiquinone oxidoreductase (complex I, CI) and ubiquinol-cytochrome c oxidoreductase (cytochrome b-c1 complex, complex III, CIII), resulting in different assemblies (supercomplex SCI(1)III(2)IV(1) and megacomplex MCI(2)III(2)IV(2)). Found in a complex with TMEM177, COA6, COX18, COX20, SCO1 and SCO2. Interacts with TMEM177 in a COX20-dependent manner. Interacts with COX20. Interacts with COX16. Cu cation serves as cofactor.

It localises to the mitochondrion inner membrane. It carries out the reaction 4 Fe(II)-[cytochrome c] + O2 + 8 H(+)(in) = 4 Fe(III)-[cytochrome c] + 2 H2O + 4 H(+)(out). In terms of biological role, component of the cytochrome c oxidase, the last enzyme in the mitochondrial electron transport chain which drives oxidative phosphorylation. The respiratory chain contains 3 multisubunit complexes succinate dehydrogenase (complex II, CII), ubiquinol-cytochrome c oxidoreductase (cytochrome b-c1 complex, complex III, CIII) and cytochrome c oxidase (complex IV, CIV), that cooperate to transfer electrons derived from NADH and succinate to molecular oxygen, creating an electrochemical gradient over the inner membrane that drives transmembrane transport and the ATP synthase. Cytochrome c oxidase is the component of the respiratory chain that catalyzes the reduction of oxygen to water. Electrons originating from reduced cytochrome c in the intermembrane space (IMS) are transferred via the dinuclear copper A center (CU(A)) of subunit 2 and heme A of subunit 1 to the active site in subunit 1, a binuclear center (BNC) formed by heme A3 and copper B (CU(B)). The BNC reduces molecular oxygen to 2 water molecules using 4 electrons from cytochrome c in the IMS and 4 protons from the mitochondrial matrix. This is Cytochrome c oxidase subunit 2 (MT-CO2) from Mandrillus leucophaeus (Drill).